Reading from the N-terminus, the 147-residue chain is UPF0306 protein YhbP (147 aa).

It belongs to the UPF0306 family.

In Escherichia coli O17:K52:H18 (strain UMN026 / ExPEC), this protein is UPF0306 protein YhbP.